The sequence spans 115 residues: Hydrogenase maturation factor HypA (115 aa).

Position 2 (His-2) interacts with Ni(2+). Residues Cys-73, Cys-76, Cys-89, and Cys-92 each coordinate Zn(2+).

It belongs to the HypA/HybF family.

Its function is as follows. Involved in the maturation of [NiFe] hydrogenases. Required for nickel insertion into the metal center of the hydrogenase. In Polaromonas naphthalenivorans (strain CJ2), this protein is Hydrogenase maturation factor HypA.